The primary structure comprises 313 residues: HPr kinase/phosphorylase (313 aa).

Residues His-140 and Lys-161 contribute to the active site. Gly-155–Ser-162 serves as a coordination point for ATP. Ser-162 is a binding site for Mg(2+). Asp-179 (proton acceptor; for phosphorylation activity. Proton donor; for dephosphorylation activity) is an active-site residue. Residues Leu-203–Asp-212 form an important for the catalytic mechanism of both phosphorylation and dephosphorylation region. Residue Glu-204 coordinates Mg(2+). Arg-245 is a catalytic residue. An important for the catalytic mechanism of dephosphorylation region spans residues Pro-266–Arg-271.

This sequence belongs to the HPrK/P family. As to quaternary structure, homohexamer. Mg(2+) serves as cofactor.

It catalyses the reaction [HPr protein]-L-serine + ATP = [HPr protein]-O-phospho-L-serine + ADP + H(+). It carries out the reaction [HPr protein]-O-phospho-L-serine + phosphate + H(+) = [HPr protein]-L-serine + diphosphate. Catalyzes the ATP- as well as the pyrophosphate-dependent phosphorylation of a specific serine residue in HPr, a phosphocarrier protein of the phosphoenolpyruvate-dependent sugar phosphotransferase system (PTS). HprK/P also catalyzes the pyrophosphate-producing, inorganic phosphate-dependent dephosphorylation (phosphorolysis) of seryl-phosphorylated HPr (P-Ser-HPr). The two antagonistic activities of HprK/P are regulated by several intracellular metabolites, which change their concentration in response to the absence or presence of rapidly metabolisable carbon sources (glucose, fructose, etc.) in the growth medium. Therefore, by controlling the phosphorylation state of HPr, HPrK/P is a sensor enzyme that plays a major role in the regulation of carbon metabolism and sugar transport: it mediates carbon catabolite repression (CCR), and regulates PTS-catalyzed carbohydrate uptake and inducer exclusion. This is HPr kinase/phosphorylase from Latilactobacillus sakei subsp. sakei (strain 23K) (Lactobacillus sakei subsp. sakei).